A 476-amino-acid polypeptide reads, in one-letter code: Cysteine--tRNA ligase (476 aa).

C31 contributes to the Zn(2+) binding site. The short motif at 33-43 is the 'HIGH' region element; the sequence is PTVYNYAHIGN. Zn(2+) contacts are provided by C211, H236, and E240. The 'KMSKS' region motif lies at 269–273; that stretch reads KMSKS. K272 provides a ligand contact to ATP.

This sequence belongs to the class-I aminoacyl-tRNA synthetase family. As to quaternary structure, monomer. Requires Zn(2+) as cofactor.

Its subcellular location is the cytoplasm. It carries out the reaction tRNA(Cys) + L-cysteine + ATP = L-cysteinyl-tRNA(Cys) + AMP + diphosphate. This Xanthomonas euvesicatoria pv. vesicatoria (strain 85-10) (Xanthomonas campestris pv. vesicatoria) protein is Cysteine--tRNA ligase.